The following is a 119-amino-acid chain: Large ribosomal subunit protein bL20c (119 aa).

Belongs to the bacterial ribosomal protein bL20 family.

The protein localises to the plastid. It localises to the chloroplast. Its function is as follows. Binds directly to 23S ribosomal RNA and is necessary for the in vitro assembly process of the 50S ribosomal subunit. It is not involved in the protein synthesizing functions of that subunit. This Saccharum officinarum (Sugarcane) protein is Large ribosomal subunit protein bL20c.